Here is a 507-residue protein sequence, read N- to C-terminus: Polygalacturonase (507 aa).

The first 20 residues, 1-20 (MSMKFMAALAFLALQLIVMA), serve as a signal peptide directing secretion. The propeptide occupies 21–54 (AGEDQSAQIMLDSDTKQYHRSSRNLRKRVHHARH). PbH1 repeat units lie at residues 215 to 241 (CDGV…DIFA), 242 to 263 (SKRF…AVGT), 265 to 285 (SSNI…SIGS), 295 to 316 (VSFV…RIKT), 324 to 345 (ASHI…LINQ), and 358 to 385 (RSAV…QLMC). The Proton donor role is filled by Asp-256. A glycan (N-linked (GlcNAc...) asparagine) is linked at Asn-267. Residue His-279 is part of the active site.

It belongs to the glycosyl hydrolase 28 family.

It localises to the secreted. It is found in the cell wall. The catalysed reaction is (1,4-alpha-D-galacturonosyl)n+m + H2O = (1,4-alpha-D-galacturonosyl)n + (1,4-alpha-D-galacturonosyl)m.. This is Polygalacturonase (JNA2) from Juniperus ashei (Ozark white cedar).